A 233-amino-acid chain; its full sequence is Small ribosomal subunit protein uS3 (233 aa).

One can recognise a KH type-2 domain in the interval 39–107 (VRQFLMKTLE…PVQINISEVR (69 aa)).

The protein belongs to the universal ribosomal protein uS3 family. In terms of assembly, part of the 30S ribosomal subunit. Forms a tight complex with proteins S10 and S14.

In terms of biological role, binds the lower part of the 30S subunit head. Binds mRNA in the 70S ribosome, positioning it for translation. In Buchnera aphidicola subsp. Acyrthosiphon pisum (strain 5A), this protein is Small ribosomal subunit protein uS3.